An 82-amino-acid chain; its full sequence is ATP synthase subunit c (82 aa).

2 helical membrane passes run 7–27 and 53–73; these read FVALAAGLIIGLGAVGACIGI and FLLAGLIDAAFLIGVGIAMMF.

Belongs to the ATPase C chain family. F-type ATPases have 2 components, F(1) - the catalytic core - and F(0) - the membrane proton channel. F(1) has five subunits: alpha(3), beta(3), gamma(1), delta(1), epsilon(1). F(0) has three main subunits: a(1), b(2) and c(10-14). The alpha and beta chains form an alternating ring which encloses part of the gamma chain. F(1) is attached to F(0) by a central stalk formed by the gamma and epsilon chains, while a peripheral stalk is formed by the delta and b chains.

The protein localises to the cell inner membrane. Functionally, f(1)F(0) ATP synthase produces ATP from ADP in the presence of a proton or sodium gradient. F-type ATPases consist of two structural domains, F(1) containing the extramembraneous catalytic core and F(0) containing the membrane proton channel, linked together by a central stalk and a peripheral stalk. During catalysis, ATP synthesis in the catalytic domain of F(1) is coupled via a rotary mechanism of the central stalk subunits to proton translocation. Key component of the F(0) channel; it plays a direct role in translocation across the membrane. A homomeric c-ring of between 10-14 subunits forms the central stalk rotor element with the F(1) delta and epsilon subunits. The protein is ATP synthase subunit c of Polaromonas sp. (strain JS666 / ATCC BAA-500).